The following is a 740-amino-acid chain: ATP-dependent RNA helicase DDX1 (740 aa).

The tract at residues 1 to 295 is necessary for interaction with HNRNPK; that stretch reads MAAFSEMGVM…APKALIVEPS (295 aa). The interval 1–448 is interaction with dsRNA; it reads MAAFSEMGVM…DTVHHVVVPV (448 aa). Residues 1 to 525 form a necessary for interaction with RELA region; the sequence is MAAFSEMGVM…KIDCDNLEQY (525 aa). In terms of domain architecture, Helicase ATP-binding spans 2 to 428; it reads AAFSEMGVMP…SEKIMHFPTW (427 aa). 46-53 contacts ATP; it reads AETGSGKT. Residues 70–247 form the B30.2/SPRY domain; the sequence is DQQEGKKGKT…LKFNFGEEEF (178 aa). N6-acetyllysine occurs at positions 239 and 268. Lysine 281 is subject to N6-acetyllysine; alternate. Lysine 281 is covalently cross-linked (Glycyl lysine isopeptide (Lys-Gly) (interchain with G-Cter in SUMO2); alternate). The short motif at 370-373 is the DEAD box element; the sequence is DEAD. Serine 481 carries the phosphoserine modification. One can recognise a Helicase C-terminal domain in the interval 493–681; the sequence is KGEYAVRAIK…QVEPDIKVPV (189 aa). The tract at residues 525–740 is necessary for interaction with HNRNPK; the sequence is YFMQQGGGPD…YLPNQLFRTF (216 aa).

The protein belongs to the DEAD box helicase family. DDX1 subfamily. Found in a multi-helicase-TICAM1 complex at least composed of DHX36, DDX1, DDX21 and TICAM1; this complex exists in resting cells with or without poly(I:C) RNA ligand stimulation. Interacts with DHX36. Interacts (via B30.2/SPRY domain) with DDX21 (via N-terminus); this interaction serves as bridges to TICAM1. Interacts with FAM98A (via N- and C-terminus). Interacts with PHF5A (via C-terminus). Interacts with MBNL1. Interacts with CSTF2. Interacts with HNRNPK. Interacts with ATM. Interacts with RELA (via C-terminus). Component of the tRNA-splicing ligase complex. Interacts with PQBP1. Interacts with ERCC6. In terms of processing, phosphorylated by ATM kinase; phosphorylation is increased in response to ionizing radiation (IR).

The protein resides in the nucleus. The protein localises to the cytoplasm. It localises to the cytoplasmic granule. It is found in the cytosol. Its subcellular location is the mitochondrion. It catalyses the reaction ATP + H2O = ADP + phosphate + H(+). Functionally, acts as an ATP-dependent RNA helicase, able to unwind both RNA-RNA and RNA-DNA duplexes. Possesses 5' single-stranded RNA overhang nuclease activity. Possesses ATPase activity on various RNA, but not DNA polynucleotides. May play a role in RNA clearance at DNA double-strand breaks (DSBs), thereby facilitating the template-guided repair of transcriptionally active regions of the genome. Together with RELA, acts as a coactivator to enhance NF-kappa-B-mediated transcriptional activation. Acts as a positive transcriptional regulator of cyclin CCND2 expression. Binds to the cyclin CCND2 promoter region. Associates with chromatin at the NF-kappa-B promoter region via association with RELA. Binds to poly(A) RNA. May be involved in 3'-end cleavage and polyadenylation of pre-mRNAs. Component of the tRNA-splicing ligase complex required to facilitate the enzymatic turnover of catalytic subunit RTCB: together with archease (ZBTB8OS), acts by facilitating the guanylylation of RTCB, a key intermediate step in tRNA ligation. Component of a multi-helicase-TICAM1 complex that acts as a cytoplasmic sensor of viral double-stranded RNA (dsRNA) and plays a role in the activation of a cascade of antiviral responses including the induction of pro-inflammatory cytokines via the adapter molecule TICAM1. Specifically binds (via helicase ATP-binding domain) on both short and long poly(I:C) dsRNA. This Macaca fascicularis (Crab-eating macaque) protein is ATP-dependent RNA helicase DDX1 (DDX1).